The primary structure comprises 155 residues: Protein-export protein SecB (155 aa).

The protein belongs to the SecB family. As to quaternary structure, homotetramer, a dimer of dimers. One homotetramer interacts with 1 SecA dimer.

Its subcellular location is the cytoplasm. Functionally, one of the proteins required for the normal export of preproteins out of the cell cytoplasm. It is a molecular chaperone that binds to a subset of precursor proteins, maintaining them in a translocation-competent state. It also specifically binds to its receptor SecA. The chain is Protein-export protein SecB from Escherichia coli O139:H28 (strain E24377A / ETEC).